The following is a 390-amino-acid chain: 4-O-beta-D-mannosyl-D-glucose phosphorylase (390 aa).

The protein belongs to the glycosyl hydrolase 130 family.

The catalysed reaction is 4-O-beta-D-mannopyranosyl-D-glucopyranose + phosphate = alpha-D-mannose 1-phosphate + D-glucose. Its function is as follows. Converts 4-O-beta-D-mannopyranosyl-D-glucopyranose (Man-Glc) to mannose 1-phosphate (Man1P) and glucose. Involved in a mannan catabolic pathway which feeds into glycolysis. The polypeptide is 4-O-beta-D-mannosyl-D-glucose phosphorylase (Bacteroides fragilis (strain ATCC 25285 / DSM 2151 / CCUG 4856 / JCM 11019 / LMG 10263 / NCTC 9343 / Onslow / VPI 2553 / EN-2)).